A 106-amino-acid chain; its full sequence is Thiosulfate sulfurtransferase GlpE (106 aa).

The 89-residue stretch at 16–104 (REQGAVLVDV…WRATYPDETV (89 aa)) folds into the Rhodanese domain. The active-site Cysteine persulfide intermediate is Cys-64.

The protein belongs to the GlpE family.

It is found in the cytoplasm. The catalysed reaction is thiosulfate + hydrogen cyanide = thiocyanate + sulfite + 2 H(+). It carries out the reaction thiosulfate + [thioredoxin]-dithiol = [thioredoxin]-disulfide + hydrogen sulfide + sulfite + 2 H(+). Functionally, transferase that catalyzes the transfer of sulfur from thiosulfate to thiophilic acceptors such as cyanide or dithiols. May function in a CysM-independent thiosulfate assimilation pathway by catalyzing the conversion of thiosulfate to sulfite, which can then be used for L-cysteine biosynthesis. The protein is Thiosulfate sulfurtransferase GlpE of Pseudomonas savastanoi pv. phaseolicola (strain 1448A / Race 6) (Pseudomonas syringae pv. phaseolicola (strain 1448A / Race 6)).